A 414-amino-acid chain; its full sequence is 26S proteasome regulatory subunit 8 homolog (414 aa).

197–204 provides a ligand contact to ATP; the sequence is GPPGTGKT.

This sequence belongs to the AAA ATPase family.

It localises to the cytoplasm. It is found in the nucleus. The 26S proteasome is involved in the ATP-dependent degradation of ubiquitinated proteins. The regulatory (or ATPase) complex confers ATP dependency and substrate specificity to the 26S complex. The chain is 26S proteasome regulatory subunit 8 homolog from Naegleria fowleri (Brain eating amoeba).